The primary structure comprises 404 residues: Putative nitronate monooxygenase (404 aa).

FMN is bound at residue 41 to 43 (PMA). His-224 (proton acceptor) is an active-site residue. Substrate is bound at residue His-224. FMN-binding positions include 270–272 (AGG) and 293–294 (GT).

It belongs to the nitronate monooxygenase family. NMO class I subfamily. FMN is required as a cofactor.

The protein resides in the cytoplasm. It catalyses the reaction ethylnitronate + O2 = chemical entity + acetaldehyde + nitrite + H(+). Functionally, catalyzes the oxidation of alkyl nitronates to produce the corresponding carbonyl compounds and nitrites. The sequence is that of Putative nitronate monooxygenase from Saccharomyces cerevisiae (strain ATCC 204508 / S288c) (Baker's yeast).